Reading from the N-terminus, the 1158-residue chain is cGMP-specific 3',5'-cyclic phosphodiesterase (1158 aa).

2 disordered regions span residues 1-137 (MTDV…SQHD) and 195-216 (SPTV…SIPE). Positions 30 to 71 (ATTSAAASASSSQAKPLTNGAKKAATAAAAAGAEEGGASASN) are enriched in low complexity. The span at 108–135 (GSTSKSSSIHTQTSQQERAGRPTSSASQ) shows a compositional bias: polar residues. A compositionally biased stretch (low complexity) spans 202 to 215 (SPRSLSNSSASSIP). GAF domains are found at residues 242 to 394 (DIDV…GIGI) and 426 to 640 (NLEC…GLGI). In terms of domain architecture, PDEase spans 670-993 (SQDQTEKLTQ…RNWQDLAEKV (324 aa)). The Proton donor role is filled by histidine 746. Residues histidine 750, histidine 786, aspartate 787, and aspartate 897 each contribute to the a divalent metal cation site. 2 disordered regions span residues 1034–1065 (QSQQ…TGAL) and 1097–1158 (VSED…CALL). Basic and acidic residues predominate over residues 1041-1052 (GSEDSHTPEHQR). The span at 1114-1130 (AAGSMGRMSASSSTSSA) shows a compositional bias: low complexity. The segment covering 1148 to 1158 (SKKRSKLCALL) has biased composition (basic residues). Cysteine 1155 carries the cysteine methyl ester modification. Cysteine 1155 carries the S-farnesyl cysteine lipid modification. Positions 1156–1158 (ALL) are cleaved as a propeptide — removed in mature form.

It belongs to the cyclic nucleotide phosphodiesterase family. Interacts with PrBP. Requires a divalent metal cation as cofactor.

The protein localises to the cell membrane. It catalyses the reaction 3',5'-cyclic GMP + H2O = GMP + H(+). Functionally, has a role regulating cGMP transport in Malpighian tubule principal cells. The protein is cGMP-specific 3',5'-cyclic phosphodiesterase of Drosophila ananassae (Fruit fly).